The sequence spans 290 residues: Glycine--tRNA ligase alpha subunit (290 aa).

Belongs to the class-II aminoacyl-tRNA synthetase family. Tetramer of two alpha and two beta subunits.

It is found in the cytoplasm. The enzyme catalyses tRNA(Gly) + glycine + ATP = glycyl-tRNA(Gly) + AMP + diphosphate. The polypeptide is Glycine--tRNA ligase alpha subunit (Maridesulfovibrio salexigens (strain ATCC 14822 / DSM 2638 / NCIMB 8403 / VKM B-1763) (Desulfovibrio salexigens)).